The sequence spans 508 residues: Photosystem II CP47 reaction center protein (508 aa).

6 helical membrane passes run 21–36 (AVHLMHTALVSGWAGS), 101–115 (ITLSGLLFLSAIWHW), 140–156 (GIHLFLSGVLCFGFGAF), 203–218 (IAAGILGILAGLFHLS), 237–252 (VLSSSIAAVFFAAFVV), and 457–472 (TFALIFFFGHIWHGAR).

Belongs to the PsbB/PsbC family. PsbB subfamily. As to quaternary structure, PSII is composed of 1 copy each of membrane proteins PsbA, PsbB, PsbC, PsbD, PsbE, PsbF, PsbH, PsbI, PsbJ, PsbK, PsbL, PsbM, PsbT, PsbX, PsbY, PsbZ, Psb30/Ycf12, at least 3 peripheral proteins of the oxygen-evolving complex and a large number of cofactors. It forms dimeric complexes. The cofactor is Binds multiple chlorophylls. PSII binds additional chlorophylls, carotenoids and specific lipids..

It is found in the plastid. Its subcellular location is the chloroplast thylakoid membrane. One of the components of the core complex of photosystem II (PSII). It binds chlorophyll and helps catalyze the primary light-induced photochemical processes of PSII. PSII is a light-driven water:plastoquinone oxidoreductase, using light energy to abstract electrons from H(2)O, generating O(2) and a proton gradient subsequently used for ATP formation. The sequence is that of Photosystem II CP47 reaction center protein from Psilotum nudum (Whisk fern).